The sequence spans 329 residues: Endonuclease 8-like 2 (329 aa).

The active-site Schiff-base intermediate with DNA is Pro2. Glu3 (proton donor) is an active-site residue. Catalysis depends on Lys50, which acts as the Proton donor; for beta-elimination activity. The residue at position 50 (Lys50) is an N6-acetyllysine. Position 68 is a phosphoserine (Ser68). Residues 68 to 116 (SLLSEPLREGEQKDKARHHQEASDPSSWSPGGDSAVPSGDDGLQCLGGD) form a disordered region. Residues 73–89 (PLREGEQKDKARHHQEA) are compositionally biased toward basic and acidic residues. The segment covering 90–102 (SDPSSWSPGGDSA) has biased composition (low complexity). Residue Lys149 is modified to N6-acetyllysine. Asn227 is a binding site for DNA. The FPG-type zinc finger occupies 280–316 (QIYQKEQCPAGHQVVRESLGPPGGFQRLTWWCPQCQP). Arg306 functions as the Proton donor; for delta-elimination activity in the catalytic mechanism.

This sequence belongs to the FPG family. Binds EP300.

Its subcellular location is the nucleus. The enzyme catalyses 2'-deoxyribonucleotide-(2'-deoxyribose 5'-phosphate)-2'-deoxyribonucleotide-DNA = a 3'-end 2'-deoxyribonucleotide-(2,3-dehydro-2,3-deoxyribose 5'-phosphate)-DNA + a 5'-end 5'-phospho-2'-deoxyribonucleoside-DNA + H(+). Acetylation of Lys-50 leads to loss of DNA nicking activity. Its function is as follows. Involved in base excision repair of DNA damaged by oxidation or by mutagenic agents. Has DNA glycosylase activity towards 5-hydroxyuracil and other oxidized derivatives of cytosine with a preference for mismatched double-stranded DNA (DNA bubbles). Has low or no DNA glycosylase activity towards thymine glycol, 2-hydroxyadenine, hypoxanthine and 8-oxoguanine. Has AP (apurinic/apyrimidinic) lyase activity and introduces nicks in the DNA strand. Cleaves the DNA backbone by beta-delta elimination to generate a single-strand break at the site of the removed base with both 3'- and 5'-phosphates. The sequence is that of Endonuclease 8-like 2 (NEIL2) from Bos taurus (Bovine).